The chain runs to 948 residues: RNA polymerase-associated protein RapA (948 aa).

The Helicase ATP-binding domain occupies 164 to 332 (EVADRIAPRV…FARLRLLDPN (169 aa)). 177 to 184 (DEVGLGKT) contacts ATP. Residues 278–281 (DEAH) carry the DEAH box motif. Positions 473–627 (RVDWLIDTLK…TCPTGNALQH (155 aa)) constitute a Helicase C-terminal domain.

Belongs to the SNF2/RAD54 helicase family. RapA subfamily. As to quaternary structure, interacts with the RNAP. Has a higher affinity for the core RNAP than for the holoenzyme. Its ATPase activity is stimulated by binding to RNAP.

Functionally, transcription regulator that activates transcription by stimulating RNA polymerase (RNAP) recycling in case of stress conditions such as supercoiled DNA or high salt concentrations. Probably acts by releasing the RNAP, when it is trapped or immobilized on tightly supercoiled DNA. Does not activate transcription on linear DNA. Probably not involved in DNA repair. In Pseudomonas savastanoi pv. phaseolicola (strain 1448A / Race 6) (Pseudomonas syringae pv. phaseolicola (strain 1448A / Race 6)), this protein is RNA polymerase-associated protein RapA.